Here is a 451-residue protein sequence, read N- to C-terminus: DNA double-strand break repair nuclease NurA (451 aa).

Asp51 and Asp126 together coordinate Mn(2+).

This sequence belongs to the NurA family. Homodimer. Interacts with HerA. The cofactor is Mn(2+).

Its activity is regulated as follows. Exonuclease activity is stimulated in the presence of HerA. Its function is as follows. Involved in DNA double-strand break (DSB) repair. Probably acts with HerA to stimulate resection of the 5' strand and produce the long 3' single-strand that is required for RadA loading. Exhibits 5' endonuclease activity and both 5' and 3' exonuclease activities. The polypeptide is DNA double-strand break repair nuclease NurA (Pyrococcus furiosus (strain ATCC 43587 / DSM 3638 / JCM 8422 / Vc1)).